Consider the following 308-residue polypeptide: MMIMEYVIETENLTKQYGETTVVNKINLHVPKGKIYGLLGRNGAGKTTAMKMMLQLAFPTDGTVRLFGTNYKENIHTLYSKVGSIIETPGFYSNLTGYENLQILAKLRGGVSKSGVEKALEVVGLHKEKRKVFSDYSLGMKQRLGIAAAIMHEPELLILDEPINGLDPIGISEIRSFLSKLSHENGTTIFISSHVLSEIEQIADVIGVMHEGHLVEEVNISELHKRNRKYTEFDVSDGKIAAKILESSYHMTDFTVQDGTIRIYDFSQSVGEINREFARNGLLITRINDSEENLEDYFSKLIGGGGIA.

Residues 8 to 236 (IETENLTKQY…NRKYTEFDVS (229 aa)) form the ABC transporter domain. 40–47 (GRNGAGKT) provides a ligand contact to ATP.

Belongs to the ABC transporter superfamily. The complex is probably composed of two ATP-binding proteins (BcrA) and two transmembrane proteins (BcrB).

Essential for high-level bacitracin resistance. Part of the ABC transporter complex BcrAB. Probably responsible for energy coupling to the transport system. The polypeptide is Bacitracin transport ATP-binding protein BcrA (Enterococcus faecalis (Streptococcus faecalis)).